Reading from the N-terminus, the 380-residue chain is Chorismate synthase (380 aa).

An NADP(+)-binding site is contributed by Arg49. FMN contacts are provided by residues Gly288, 303–307 (KPPSS), and Arg330.

This sequence belongs to the chorismate synthase family. FMNH2 serves as cofactor.

The catalysed reaction is 5-O-(1-carboxyvinyl)-3-phosphoshikimate = chorismate + phosphate. It functions in the pathway metabolic intermediate biosynthesis; chorismate biosynthesis; chorismate from D-erythrose 4-phosphate and phosphoenolpyruvate: step 7/7. Catalyzes the anti-1,4-elimination of the C-3 phosphate and the C-6 proR hydrogen from 5-enolpyruvylshikimate-3-phosphate (EPSP) to yield chorismate, which is the branch point compound that serves as the starting substrate for the three terminal pathways of aromatic amino acid biosynthesis. This reaction introduces a second double bond into the aromatic ring system. In Aeropyrum pernix (strain ATCC 700893 / DSM 11879 / JCM 9820 / NBRC 100138 / K1), this protein is Chorismate synthase.